We begin with the raw amino-acid sequence, 172 residues long: Transmembrane protein 91 (172 aa).

Residues 1-97 (MDNSSIQELQ…SPLLPHDHLG (97 aa)) are Extracellular-facing. Residues 60–86 (GLGEPETPDFEDTLSSDSDSDDDGGDR) are disordered. A compositionally biased stretch (acidic residues) spans 65-83 (ETPDFEDTLSSDSDSDDDG). A helical membrane pass occupies residues 98-118 (LAVFSVLCCFWPVGIAAFCLA). The Cytoplasmic segment spans residues 119 to 139 (HKTNKAWAKGDVQGAGAASRR). A helical membrane pass occupies residues 140–160 (AFLLGVLAVGLGLCTYAAALV). The Extracellular segment spans residues 161-172 (TLAAYLASRDPP).

The protein belongs to the CD225/Dispanin family.

It localises to the membrane. The polypeptide is Transmembrane protein 91 (Tmem91) (Mus musculus (Mouse)).